The following is a 491-amino-acid chain: Probable cytosol aminopeptidase (491 aa).

2 residues coordinate Mn(2+): Lys-263 and Asp-268. Residue Lys-275 is part of the active site. Mn(2+) contacts are provided by Asp-286, Asp-345, and Glu-347. Arg-349 is an active-site residue.

This sequence belongs to the peptidase M17 family. Requires Mn(2+) as cofactor.

Its subcellular location is the cytoplasm. It catalyses the reaction Release of an N-terminal amino acid, Xaa-|-Yaa-, in which Xaa is preferably Leu, but may be other amino acids including Pro although not Arg or Lys, and Yaa may be Pro. Amino acid amides and methyl esters are also readily hydrolyzed, but rates on arylamides are exceedingly low.. It carries out the reaction Release of an N-terminal amino acid, preferentially leucine, but not glutamic or aspartic acids.. Its function is as follows. Presumably involved in the processing and regular turnover of intracellular proteins. Catalyzes the removal of unsubstituted N-terminal amino acids from various peptides. This chain is Probable cytosol aminopeptidase, found in Haemophilus influenzae (strain PittEE).